Consider the following 472-residue polypeptide: Probable diguanylate cyclase DgcF (472 aa).

8 helical membrane passes run S21–V41, L44–L64, V90–V110, L128–V148, F167–P187, I198–F218, L237–I257, and L273–N293. One can recognise a GGDEF domain in the interval Q330–Y467. 2 residues coordinate Mg(2+): D338 and I339. 3 residues coordinate substrate: N346, H351, and D355. Residue E381 participates in Mg(2+) binding.

Homodimer. Requires Mg(2+) as cofactor.

Its subcellular location is the cell membrane. The enzyme catalyses 2 GTP = 3',3'-c-di-GMP + 2 diphosphate. It functions in the pathway purine metabolism; 3',5'-cyclic di-GMP biosynthesis. In terms of biological role, catalyzes the synthesis of cyclic-di-GMP (c-di-GMP) via the condensation of 2 GTP molecules. In Escherichia coli O157:H7, this protein is Probable diguanylate cyclase DgcF.